Reading from the N-terminus, the 380-residue chain is MIKFSINKNAFQNALRITKQAIGSKVTIPALTKLKIEVEENGITLIGSNGQISIKNFLPVDNKDASMLISGTGSVLLEAAFFENVVSQLPEVTLEFTEKEQKQVLLTSGKSEITLKGLDSEIYPHLQEISEGSSLKMKVKVLKEIFTETVFAVSTQENRPIFTGVHLETLSTGELKAVATDSHRMSQRLLPLEDSELKFDVILPSKSINSFKNVFTNDEEEIEIFISGSQMLFRNETISYYSRLIEGSYPDTNRLIPNEADYTLDLVFDAAQLRHTMDRARLLTVMTTNGTVKLTVSGDSVVTTANSPEVGSVHEELTALSKEGNDLAISFNPEYLIDALKVIKAPEVRIRFISNVRPFTLQPRNEESGFVQLITPVRTN.

It belongs to the beta sliding clamp family. Forms a ring-shaped head-to-tail homodimer around DNA which binds and tethers DNA polymerases and other proteins to the DNA. The DNA replisome complex has a single clamp-loading complex (3 tau and 1 each of delta, delta', psi and chi subunits) which binds 3 Pol III cores (1 core on the leading strand and 2 on the lagging strand) each with a beta sliding clamp dimer. Additional proteins in the replisome are other copies of gamma, psi and chi, Ssb, DNA helicase and RNA primase.

The protein localises to the cytoplasm. Its function is as follows. Confers DNA tethering and processivity to DNA polymerases and other proteins. Acts as a clamp, forming a ring around DNA (a reaction catalyzed by the clamp-loading complex) which diffuses in an ATP-independent manner freely and bidirectionally along dsDNA. Initially characterized for its ability to contact the catalytic subunit of DNA polymerase III (Pol III), a complex, multichain enzyme responsible for most of the replicative synthesis in bacteria; Pol III exhibits 3'-5' exonuclease proofreading activity. The beta chain is required for initiation of replication as well as for processivity of DNA replication. The sequence is that of Beta sliding clamp (dnaN) from Lactococcus lactis subsp. lactis (strain IL1403) (Streptococcus lactis).